We begin with the raw amino-acid sequence, 131 residues long: Peptide methionine sulfoxide reductase MsrB (131 aa).

The region spanning 8–130 is the MsrB domain; the sequence is LDTWREELTD…NSLSLKLVPR (123 aa). Positions 47, 50, 96, and 99 each coordinate Zn(2+). The Nucleophile role is filled by cysteine 119.

It belongs to the MsrB Met sulfoxide reductase family. Zn(2+) serves as cofactor.

The catalysed reaction is L-methionyl-[protein] + [thioredoxin]-disulfide + H2O = L-methionyl-(R)-S-oxide-[protein] + [thioredoxin]-dithiol. This Ectopseudomonas mendocina (strain ymp) (Pseudomonas mendocina) protein is Peptide methionine sulfoxide reductase MsrB.